A 115-amino-acid polypeptide reads, in one-letter code: DNA-binding protein NP_4416A (115 aa).

The span at 1–11 (MSGEPTDEDLE) shows a compositional bias: acidic residues. The segment at 1–46 (MSGEPTDEDLEELRKKKMEQLKEQGGEGQSEAAEAQRQQAEAQKKA) is disordered. A compositionally biased stretch (basic and acidic residues) spans 12–25 (ELRKKKMEQLKEQG). Positions 29 to 41 (QSEAAEAQRQQAE) are enriched in low complexity.

Belongs to the PDCD5 family.

This chain is DNA-binding protein NP_4416A, found in Natronomonas pharaonis (strain ATCC 35678 / DSM 2160 / CIP 103997 / JCM 8858 / NBRC 14720 / NCIMB 2260 / Gabara) (Halobacterium pharaonis).